Here is a 67-residue protein sequence, read N- to C-terminus: DNA-directed RNA polymerase subunit omega (67 aa).

This sequence belongs to the RNA polymerase subunit omega family. The RNAP catalytic core consists of 2 alpha, 1 beta, 1 beta' and 1 omega subunit. When a sigma factor is associated with the core the holoenzyme is formed, which can initiate transcription.

The enzyme catalyses RNA(n) + a ribonucleoside 5'-triphosphate = RNA(n+1) + diphosphate. Promotes RNA polymerase assembly. Latches the N- and C-terminal regions of the beta' subunit thereby facilitating its interaction with the beta and alpha subunits. This chain is DNA-directed RNA polymerase subunit omega, found in Ralstonia nicotianae (strain ATCC BAA-1114 / GMI1000) (Ralstonia solanacearum).